A 250-amino-acid polypeptide reads, in one-letter code: Accessory gland-specific peptide 26Aa (250 aa).

An N-terminal signal peptide occupies residues 1–18; that stretch reads MNQILLCSQILLLFFTVA. Residues 79 to 100 form a disordered region; that stretch reads DYPINNSKSRKNSSTLPSPILT. Positions 82–95 are enriched in polar residues; sequence INNSKSRKNSSTLP. N83, N90, and N131 each carry an N-linked (GlcNAc...) asparagine glycan. 2 disordered regions span residues 172–191 and 230–250; these read NVQN…SKDI and NNPA…PSTT. Over residues 178–187 the composition is skewed to basic residues; that stretch reads KSTKSCKKRP. Residues 240–250 are compositionally biased toward polar residues; it reads KSPSEGNPSTT.

Post-translationally, proteolytically cleaved as it is secreted and in the recipient female. Main cells of the accessory glands of males.

It localises to the secreted. It is found in the extracellular space. In terms of biological role, this protein is transferred from male to female's hemolymph during mating, affecting egglaying and behavior after mating. This chain is Accessory gland-specific peptide 26Aa (Acp26Aa), found in Drosophila mauritiana (Fruit fly).